The sequence spans 444 residues: Glucarate dehydratase (444 aa).

Substrate-binding residues include His-30, Thr-101, Tyr-148, and Lys-203. Catalysis depends on Lys-205, which acts as the Proton acceptor. Mg(2+) contacts are provided by Asp-233, Glu-264, and Asn-287. 233–235 (DPN) provides a ligand contact to substrate. Substrate-binding positions include Asn-287, 337-339 (HSN), His-366, and Arg-420. The Proton acceptor role is filled by His-337.

The protein belongs to the mandelate racemase/muconate lactonizing enzyme family. GlucD subfamily. It depends on Mg(2+) as a cofactor.

The catalysed reaction is D-glucarate = 5-dehydro-4-deoxy-D-glucarate + H2O. It functions in the pathway carbohydrate acid metabolism; D-glucarate degradation; 2,5-dioxopentanoate from D-glucarate: step 1/2. Functionally, catalyzes the dehydration of glucarate to 5-keto-4-deoxy-D-glucarate (5-kdGluc). This Acinetobacter baylyi (strain ATCC 33305 / BD413 / ADP1) protein is Glucarate dehydratase (gudD).